A 416-amino-acid chain; its full sequence is MSSALDDPTLERNFKGHRDAITSLDFSPSGKQIASGSVDASVMVWNMKPQSRAYRFTGHKDAVTCVQFSPSAHLLASSSRDKTVRLWVPSVKGESVLFRAHTGSVRSVCFSADGQSLLTASDDQSIKLWSVHRQKIICTLREHNNWVRCARFSPDGQLMVSVSDDRTVKLWDASSRQLIHTFCEPGGYSSYVDFHPSSTCIATASSDNTVRVWDIRTHTLLQHYQVHSAAVNALSFHPSGNHLLTASSDSTLKILDLLEGRLLYTLHGHQGSASCVSFSRSGDQFASAGSDQQVMVWRTNFDSVDYSRVLQQKRDHRTPSAQASGAAGDPESRSGQKTEVSPLLGVSAERSVREPTPQQQTDADGVPAALTSTLQHIIGQLDVLTQTVAILEQRLTLTEDKLKECLEQQHQALTEH.

WD repeat units follow at residues 16–55 (GHRDAITSLDFSPSGKQIASGSVDASVMVWNMKPQSRAYR), 58–97 (GHKDAVTCVQFSPSAHLLASSSRDKTVRLWVPSVKGESVL), 100–139 (AHTGSVRSVCFSADGQSLLTASDDQSIKLWSVHRQKIICT), 142–181 (EHNNWVRCARFSPDGQLMVSVSDDRTVKLWDASSRQLIHT), 184–223 (EPGGYSSYVDFHPSSTCIATASSDNTVRVWDIRTHTLLQH), 226–265 (VHSAAVNALSFHPSGNHLLTASSDSTLKILDLLEGRLLYT), and 268–307 (GHQGSASCVSFSRSGDQFASAGSDQQVMVWRTNFDSVDYS). The segment at 311–340 (QQKRDHRTPSAQASGAAGDPESRSGQKTEV) is disordered. The stretch at 380–412 (QLDVLTQTVAILEQRLTLTEDKLKECLEQQHQA) forms a coiled coil.

It belongs to the WD repeat POC1 family.

Its function is as follows. May play an important role in centriole assembly and/or stability and ciliogenesis. The polypeptide is POC1 centriolar protein homolog A (Danio rerio (Zebrafish)).